Here is a 189-residue protein sequence, read N- to C-terminus: Parkinson disease protein 7 homolog (189 aa).

Ala-2 carries the N-acetylalanine modification. 2 S-palmitoyl cysteine lipidation sites follow: Cys-46 and Cys-53. The residue at position 67 (Tyr-67) is a Phosphotyrosine. Residue Cys-106 is the Nucleophile of the active site. The residue at position 106 (Cys-106) is a Cysteine sulfinic acid (-SO2H); alternate. A lipid anchor (S-palmitoyl cysteine; alternate) is attached at Cys-106. His-126 is an active-site residue. A Glycyl lysine isopeptide (Lys-Gly) (interchain with G-Cter in SUMO) cross-link involves residue Lys-130. An N6-acetyllysine modification is found at Lys-148. An N6-succinyllysine modification is found at Lys-182.

It belongs to the peptidase C56 family. Homodimer. Binds EFCAB6/DJBP and PIAS2. Part of a ternary complex containing PARK7, EFCAB6/DJBP and AR. Interacts (via N-terminus) with OTUD7B. Interacts with BBS1, HIPK1, CLCF1 and MTERF. Forms a complex with PINK1 and PRKN. Interacts (via C-terminus) with NCF1; the interaction is enhanced by LPS and modulates NCF1 phosphorylation and membrane translocation. Interacts with NENF. Requires Deglycase activity does not require glutathione as a cofactor, however, glycated glutathione constitutes a PARK7 substrate. as cofactor. In terms of processing, sumoylated on Lys-130 by PIAS2 or PIAS4; which is essential for cell-growth promoting activity and transforming activity. Post-translationally, undergoes cleavage of a C-terminal peptide and subsequent activation of protease activity in response to oxidative stress. As to expression, ubiquitous. Detected on epididymal sperm. Highly expressed in testis and prostate. Detected at lower levels in heart, lung, brain, liver, kidney, seminal vesicle, caput and corpus epididymis.

It localises to the cell membrane. It is found in the cytoplasm. Its subcellular location is the membrane raft. The protein localises to the nucleus. The protein resides in the mitochondrion. It localises to the endoplasmic reticulum. It catalyses the reaction N(omega)-(1-hydroxy-2-oxopropyl)-L-arginyl-[protein] + H2O = lactate + L-arginyl-[protein] + H(+). It carries out the reaction N(6)-(1-hydroxy-2-oxopropyl)-L-lysyl-[protein] + H2O = lactate + L-lysyl-[protein] + H(+). The catalysed reaction is S-(1-hydroxy-2-oxopropyl)-L-cysteinyl-[protein] + H2O = lactate + L-cysteinyl-[protein] + H(+). The enzyme catalyses N(omega)-(1-hydroxy-2-oxoethyl)-L-arginyl-[protein] + H2O = L-arginyl-[protein] + glycolate + H(+). It catalyses the reaction N(6)-(1-hydroxy-2-oxoethyl)-L-lysyl-[protein] + H2O = glycolate + L-lysyl-[protein] + H(+). It carries out the reaction S-(1-hydroxy-2-oxoethyl)-L-cysteinyl-[protein] + H2O = glycolate + L-cysteinyl-[protein] + H(+). The catalysed reaction is N(2)-(1-hydroxy-2-oxopropyl)-dGTP + H2O = lactate + dGTP + H(+). The enzyme catalyses N(2)-(1-hydroxy-2-oxopropyl)-GTP + H2O = lactate + GTP + H(+). It catalyses the reaction N(2)-(1-hydroxy-2-oxopropyl)-GDP + H2O = lactate + GDP + H(+). It carries out the reaction N(2)-(1-hydroxy-2-oxopropyl)-GMP + H2O = lactate + GMP + H(+). The catalysed reaction is N(2)-(1-hydroxy-2-oxoethyl)-dGTP + H2O = dGTP + glycolate + H(+). The enzyme catalyses N(2)-(1-hydroxy-2-oxoethyl)-GTP + H2O = glycolate + GTP + H(+). It catalyses the reaction N(2)-(1-hydroxy-2-oxoethyl)-GDP + H2O = glycolate + GDP + H(+). It carries out the reaction N(2)-(1-hydroxy-2-oxoethyl)-GMP + H2O = glycolate + GMP + H(+). The catalysed reaction is an N(2)-(1-hydroxy-2-oxopropyl)-guanosine in RNA + H2O = a guanosine in RNA + lactate + H(+). The enzyme catalyses an N(2)-(1-hydroxy-2-oxopropyl)-2'-deoxyguanosine in DNA + H2O = a 2'-deoxyguanosine in DNA + lactate + H(+). It catalyses the reaction an N(2)-(1-hydroxy-2-oxoethyl)-guanosine in RNA + H2O = a guanosine in RNA + glycolate + H(+). It carries out the reaction an N(2)-(1-hydroxy-2-oxoethyl)-2'-deoxyguanosine in DNA + H2O = a 2'-deoxyguanosine in DNA + glycolate + H(+). Protein and nucleotide deglycase that catalyzes the deglycation of the Maillard adducts formed between amino groups of proteins or nucleotides and reactive carbonyl groups of glyoxals. Thus, functions as a protein deglycase that repairs methylglyoxal- and glyoxal-glycated proteins, and releases repaired proteins and lactate or glycolate, respectively. Deglycates cysteine, arginine and lysine residues in proteins, and thus reactivates these proteins by reversing glycation by glyoxals. Acts on early glycation intermediates (hemithioacetals and aminocarbinols), preventing the formation of advanced glycation endproducts (AGE) that cause irreversible damage. Also functions as a nucleotide deglycase able to repair glycated guanine in the free nucleotide pool (GTP, GDP, GMP, dGTP) and in DNA and RNA. Is thus involved in a major nucleotide repair system named guanine glycation repair (GG repair), dedicated to reversing methylglyoxal and glyoxal damage via nucleotide sanitization and direct nucleic acid repair. Also displays an apparent glyoxalase activity that in fact reflects its deglycase activity. Plays an important role in cell protection against oxidative stress and cell death acting as oxidative stress sensor and redox-sensitive chaperone and protease; functions probably related to its primary function. It is involved in neuroprotective mechanisms like the stabilization of NFE2L2 and PINK1 proteins, male fertility as a positive regulator of androgen signaling pathway as well as cell growth and transformation through, for instance, the modulation of NF-kappa-B signaling pathway. Eliminates hydrogen peroxide and protects cells against hydrogen peroxide-induced cell death. Required for correct mitochondrial morphology and function as well as for autophagy of dysfunctional mitochondria. Plays a role in regulating expression or stability of the mitochondrial uncoupling proteins SLC25A14 and SLC25A27 in dopaminergic neurons of the substantia nigra pars compacta and attenuates the oxidative stress induced by calcium entry into the neurons via L-type channels during pacemaking. Regulates astrocyte inflammatory responses, may modulate lipid rafts-dependent endocytosis in astrocytes and neuronal cells. In pancreatic islets, involved in the maintenance of mitochondrial reactive oxygen species (ROS) levels and glucose homeostasis in an age- and diet dependent manner. Protects pancreatic beta cells from cell death induced by inflammatory and cytotoxic setting. Binds to a number of mRNAs containing multiple copies of GG or CC motifs and partially inhibits their translation but dissociates following oxidative stress. Metal-binding protein able to bind copper as well as toxic mercury ions, enhances the cell protection mechanism against induced metal toxicity. In macrophages, interacts with the NADPH oxidase subunit NCF1 to direct NADPH oxidase-dependent ROS production, and protects against sepsis. This is Parkinson disease protein 7 homolog from Rattus norvegicus (Rat).